We begin with the raw amino-acid sequence, 467 residues long: 55 kDa erythrocyte membrane protein (467 aa).

Positions 73-154 constitute a PDZ domain; that stretch reads EVAFEKNQSE…VVTMKIIPRP (82 aa). An SH3 domain is found at 160–230; it reads PCEMYMRGQF…PSPELQEWRA (71 aa). The region spanning 283–452 is the Guanylate kinase-like domain; that stretch reads RKTLVLIGAP…SVKIVEEALE (170 aa).

The protein belongs to the MAGUK family. In terms of processing, extensively palmitoylated.

It is found in the membrane. Its function is as follows. May play a role in the regulation of neutrophil polarization. The polypeptide is 55 kDa erythrocyte membrane protein (mpp1) (Takifugu rubripes (Japanese pufferfish)).